Consider the following 216-residue polypeptide: RNA chaperone ProQ (216 aa).

A compositionally biased stretch (basic and acidic residues) spans 105–115 (ESKAKVAEKRK). The interval 105–159 (ESKAKVAEKRKAQNAAKPGAKKSYKSKTVPAFKSSPKGTNQDNVKPKAKLPPPEK) is disordered.

The protein belongs to the ProQ family.

The protein localises to the cytoplasm. In terms of biological role, RNA chaperone with significant RNA binding, RNA strand exchange and RNA duplexing activities. The chain is RNA chaperone ProQ from Pseudoalteromonas atlantica (strain T6c / ATCC BAA-1087).